The sequence spans 295 residues: UDP-N-acetylenolpyruvoylglucosamine reductase (295 aa).

The FAD-binding PCMH-type domain occupies 26 to 189 (VGGQADILFK…IEAEFKGVSS (164 aa)). R169 is a catalytic residue. C218 (proton donor) is an active-site residue. The active site involves E288.

This sequence belongs to the MurB family. The cofactor is FAD.

The protein resides in the cytoplasm. The catalysed reaction is UDP-N-acetyl-alpha-D-muramate + NADP(+) = UDP-N-acetyl-3-O-(1-carboxyvinyl)-alpha-D-glucosamine + NADPH + H(+). It participates in cell wall biogenesis; peptidoglycan biosynthesis. Cell wall formation. The protein is UDP-N-acetylenolpyruvoylglucosamine reductase of Wolbachia sp. subsp. Brugia malayi (strain TRS).